Here is a 194-residue protein sequence, read N- to C-terminus: Thymidine kinase (194 aa).

Residues 15-22 and 88-91 contribute to the ATP site; these read GSMFSGKS and DEVQ. Glu-89 functions as the Proton acceptor in the catalytic mechanism. The Zn(2+) site is built by Cys-145, Cys-148, Cys-183, and Cys-186.

This sequence belongs to the thymidine kinase family. Homotetramer.

The protein localises to the cytoplasm. The enzyme catalyses thymidine + ATP = dTMP + ADP + H(+). This chain is Thymidine kinase, found in Bacillus anthracis (strain A0248).